The chain runs to 133 residues: Ribulose bisphosphate carboxylase small subunit (133 aa).

It belongs to the RuBisCO small chain family. As to quaternary structure, heterohexadecamer of 8 large and 8 small subunits.

RuBisCO catalyzes two reactions: the carboxylation of D-ribulose 1,5-bisphosphate, the primary event in carbon dioxide fixation, as well as the oxidative fragmentation of the pentose substrate. Both reactions occur simultaneously and in competition at the same active site. Although the small subunit is not catalytic it is essential for maximal activity. The chain is Ribulose bisphosphate carboxylase small subunit from Xanthobacter flavus.